Consider the following 364-residue polypeptide: Long-wave-sensitive opsin 1 (364 aa).

Residues 1-52 (MAHTWGPQRLAGGQPQANFEESTQGSIFTYTNSNSTRDPFEGPNYHIAPRWV) are Extracellular-facing. O-linked (GlcNAc) serine glycosylation is present at serine 22. Asparagine 34 is a glycosylation site (N-linked (GlcNAc...) asparagine). Residues 53-77 (YHLTSAWMVFVVIASVFTNGLVLAA) form a helical membrane-spanning segment. Residues 78 to 89 (TMRFKKLRHPLN) lie on the Cytoplasmic side of the membrane. A helical membrane pass occupies residues 90-115 (WILVNLAIADLAETIIASTISVVNQM). Topologically, residues 116 to 129 (YGYFVLGHPLCVVE) are extracellular. Cysteine 126 and cysteine 203 are oxidised to a cystine. A helical transmembrane segment spans residues 130–149 (GYTVSLCGITGLWSLAIISW). At 150–168 (ERWMVVCKPFGNVRFDAKL) the chain is on the cytoplasmic side. Residues 169 to 192 (ATAGIAFSWIWAAVWTAPPIFGWS) form a helical membrane-spanning segment. The Extracellular portion of the chain corresponds to 193–218 (RYWPHGLKTSCGPDVFSGSSYPGVQS). A helical transmembrane segment spans residues 219–246 (YMIVLMITCCFIPLSVIILCYLQVWLAI). Topologically, residues 247-268 (RAVAKQQKESESTQKAEKEVTR) are cytoplasmic. A helical membrane pass occupies residues 269 to 292 (MVMVMIFAYCLCWGPYTFFACFAA). Over 293–300 (AHPGYAFH) the chain is Extracellular. The helical transmembrane segment at 301 to 325 (PLVAALPAYFAKSATIYNPIIYVFM) threads the bilayer. At lysine 312 the chain carries N6-(retinylidene)lysine. Residues 326-364 (NRQFRNCILQLFGKKVDDSSELSSVSKTEASSVSSVSPA) lie on the Cytoplasmic side of the membrane.

It belongs to the G-protein coupled receptor 1 family. Opsin subfamily. Post-translationally, phosphorylated on some or all of the serine and threonine residues present in the C-terminal region. The three color pigments are found in the cone photoreceptor cells.

It is found in the membrane. Functionally, visual pigments are the light-absorbing molecules that mediate vision. They consist of an apoprotein, opsin, covalently linked to cis-retinal. The chain is Long-wave-sensitive opsin 1 (OPN1LW) from Capra hircus (Goat).